A 306-amino-acid polypeptide reads, in one-letter code: Diacylglycerol kinase (306 aa).

The 132-residue stretch at 1–132 folds into the DAGKc domain; sequence MRKRARIIYN…VDIGKMNSRY (132 aa). Residues 10-14, T41, 67-73, and T94 each bind ATP; these read NPTSG and GDGTLNE. Residues R213, D216, and Y218 each contribute to the Mg(2+) site. The Proton acceptor role is filled by E273.

This sequence belongs to the diacylglycerol/lipid kinase family. Homodimer. The cofactor is Mg(2+).

It catalyses the reaction a 1,2-diacyl-sn-glycerol + ATP = a 1,2-diacyl-sn-glycero-3-phosphate + ADP + H(+). Functionally, catalyzes the phosphorylation of diacylglycerol (DAG) into phosphatidic acid. Is a key enzyme involved in the production of lipoteichoic acid by reintroducing DAG formed from the breakdown of membrane phospholipids into the phosphatidylglycerol biosynthetic pathway. The polypeptide is Diacylglycerol kinase (dagK) (Staphylococcus carnosus (strain TM300)).